Reading from the N-terminus, the 190-residue chain is Potassium-transporting ATPase KdpC subunit (190 aa).

A helical membrane pass occupies residues 10–30 (TFLFLLLITGGVYPLLTTALG).

It belongs to the KdpC family. The system is composed of three essential subunits: KdpA, KdpB and KdpC.

The protein localises to the cell inner membrane. In terms of biological role, part of the high-affinity ATP-driven potassium transport (or Kdp) system, which catalyzes the hydrolysis of ATP coupled with the electrogenic transport of potassium into the cytoplasm. This subunit acts as a catalytic chaperone that increases the ATP-binding affinity of the ATP-hydrolyzing subunit KdpB by the formation of a transient KdpB/KdpC/ATP ternary complex. The chain is Potassium-transporting ATPase KdpC subunit from Escherichia coli (strain SMS-3-5 / SECEC).